A 106-amino-acid polypeptide reads, in one-letter code: UPF0473 protein LSEI_0788 (106 aa).

Belongs to the UPF0473 family.

This chain is UPF0473 protein LSEI_0788, found in Lacticaseibacillus paracasei (strain ATCC 334 / BCRC 17002 / CCUG 31169 / CIP 107868 / KCTC 3260 / NRRL B-441) (Lactobacillus paracasei).